The chain runs to 270 residues: NAD kinase (270 aa).

Asp49 (proton acceptor) is an active-site residue. NAD(+)-binding positions include 49–50, Arg54, 126–127, Arg152, Asp154, 165–170, Ala189, and Gln227; these read DG, NE, and TAYNKS.

The protein belongs to the NAD kinase family. It depends on a divalent metal cation as a cofactor.

The protein localises to the cytoplasm. It carries out the reaction NAD(+) + ATP = ADP + NADP(+) + H(+). Its function is as follows. Involved in the regulation of the intracellular balance of NAD and NADP, and is a key enzyme in the biosynthesis of NADP. Catalyzes specifically the phosphorylation on 2'-hydroxyl of the adenosine moiety of NAD to yield NADP. The sequence is that of NAD kinase from Lactococcus lactis subsp. cremoris (strain SK11).